The sequence spans 129 residues: Glycerol-3-phosphate cytidylyltransferase (129 aa).

CTP-binding positions include 9 to 10 and 14 to 17; these read TF and HYGH. Lys-44 is a binding site for substrate. CTP is bound at residue Lys-46. Lys-77 lines the substrate pocket. 113 to 120 serves as a coordination point for CTP; sequence RTDGISTT.

The protein belongs to the cytidylyltransferase family. As to quaternary structure, homodimer.

Its subcellular location is the cytoplasm. The enzyme catalyses sn-glycerol 3-phosphate + CTP + H(+) = CDP-glycerol + diphosphate. Its pathway is cell wall biogenesis; poly(ribitol phosphate) teichoic acid biosynthesis. In terms of biological role, catalyzes the transfer of the cytidylyl group of CTP to sn-glycerol 3-phosphate so the activated glycerol 3-phosphate can be used for teichoic acid synthesis, via incorporation into both the linkage unit by TarB and TarF. The protein is Glycerol-3-phosphate cytidylyltransferase (tarD) of Bacillus spizizenii (strain ATCC 23059 / NRRL B-14472 / W23) (Bacillus subtilis subsp. spizizenii).